The sequence spans 506 residues: Cytochrome P450 4B1 (506 aa).

Glutamate 310 is a heme binding site. Serine 431 carries the post-translational modification Phosphoserine. Cysteine 448 serves as a coordination point for heme.

It belongs to the cytochrome P450 family. The cofactor is heme.

The protein localises to the endoplasmic reticulum membrane. It is found in the microsome membrane. It catalyses the reaction an organic molecule + reduced [NADPH--hemoprotein reductase] + O2 = an alcohol + oxidized [NADPH--hemoprotein reductase] + H2O + H(+). Cytochromes P450 are a group of heme-thiolate monooxygenases. In liver microsomes, this enzyme is involved in an NADPH-dependent electron transport pathway. It oxidizes a variety of structurally unrelated compounds, including steroids, fatty acids, and xenobiotics. This Oryctolagus cuniculus (Rabbit) protein is Cytochrome P450 4B1 (CYP4B1).